The chain runs to 717 residues: Photosystem I P700 chlorophyll a apoprotein A1 (717 aa).

A run of 8 helical transmembrane segments spans residues 58-81 (VFSA…FHGA), 144-167 (LYCT…FHYH), 183-207 (LNHH…HVSL), 279-297 (IAHH…GHMY), 334-357 (WHAQ…HHMY), 373-399 (LSLF…IFMV), 421-443 (AIIS…LYIH), and 519-537 (FLVH…LILL). Residues C561 and C570 each coordinate [4Fe-4S] cluster. 2 consecutive transmembrane segments (helical) span residues 577-598 (HVFL…HFSW) and 652-674 (LSAY…MFLF). H663 lines the chlorophyll a' pocket. Residues M671 and Y679 each coordinate chlorophyll a. W680 contacts phylloquinone. Residues 712-717 (AVGVTH) traverse the membrane as a helical segment.

The protein belongs to the PsaA/PsaB family. As to quaternary structure, the PsaA/B heterodimer binds the P700 chlorophyll special pair and subsequent electron acceptors. PSI consists of a core antenna complex that captures photons, and an electron transfer chain that converts photonic excitation into a charge separation. The eukaryotic PSI reaction center is composed of at least 11 subunits. The cofactor is P700 is a chlorophyll a/chlorophyll a' dimer, A0 is one or more chlorophyll a, A1 is one or both phylloquinones and FX is a shared 4Fe-4S iron-sulfur center..

The protein localises to the plastid. It is found in the chloroplast thylakoid membrane. It catalyses the reaction reduced [plastocyanin] + hnu + oxidized [2Fe-2S]-[ferredoxin] = oxidized [plastocyanin] + reduced [2Fe-2S]-[ferredoxin]. In terms of biological role, psaA and PsaB bind P700, the primary electron donor of photosystem I (PSI), as well as the electron acceptors A0, A1 and FX. PSI is a plastocyanin-ferredoxin oxidoreductase, converting photonic excitation into a charge separation, which transfers an electron from the donor P700 chlorophyll pair to the spectroscopically characterized acceptors A0, A1, FX, FA and FB in turn. Oxidized P700 is reduced on the lumenal side of the thylakoid membrane by plastocyanin. In Drimys winteri (Winter's bark), this protein is Photosystem I P700 chlorophyll a apoprotein A1.